A 92-amino-acid chain; its full sequence is Small ribosomal subunit protein uS19 (92 aa).

The disordered stretch occupies residues 72-92; it reads GEFSPTRTYTGHGSDKKSKRG.

It belongs to the universal ribosomal protein uS19 family.

In terms of biological role, protein S19 forms a complex with S13 that binds strongly to the 16S ribosomal RNA. This is Small ribosomal subunit protein uS19 from Gluconobacter oxydans (strain 621H) (Gluconobacter suboxydans).